Here is a 441-residue protein sequence, read N- to C-terminus: Probable cyclic di-GMP phosphodiesterase VC_1348 (441 aa).

Residues 72–187 form the Response regulatory domain; the sequence is TILIVDDSPD…LLKSRVHTHL (116 aa). Asp-120 is modified (4-aspartylphosphate). One can recognise an HD-GYP domain in the interval 214–425; sequence LDRMQDAVVF…FIDIAQKFAD (212 aa).

The enzyme catalyses 3',3'-c-di-GMP + 2 H2O = 2 GMP + 2 H(+). Probable phosphodiesterase (PDE) that catalyzes the hydrolysis of cyclic diguanylate (c-di-GMP). Increases motility and decreases biofilm formation in vivo. The polypeptide is Probable cyclic di-GMP phosphodiesterase VC_1348 (Vibrio cholerae serotype O1 (strain ATCC 39315 / El Tor Inaba N16961)).